Consider the following 517-residue polypeptide: Protein BTN1 (517 aa).

8 helical membrane passes run 24–44, 57–77, 88–108, 112–132, 146–166, 169–189, 371–391, and 409–429; these read LFAAFMIFGLLNNVLYVIILS, GVVALFNIFPALITKVVWPLL, VGFCTICSWFGIITIALSSSL, LLGISLASLSSGMGELTFLQL, LGAWSSGTGFAGVAGAGIWWL, GLGVKGGLGLSSFLPLFFPIT, PAIIQFLVLSLLFLQAKTFFF, and SITIVFLLICLEGLCGGSGYV.

Belongs to the battenin family.

It is found in the vacuole membrane. Its function is as follows. Involved in vacuolar transport and vacuole pH homeostasis. Also required for cytokinesis. This Cryptococcus neoformans var. neoformans serotype D (strain B-3501A) (Filobasidiella neoformans) protein is Protein BTN1 (BTN1).